A 114-amino-acid chain; its full sequence is MESEPLYKLKAEFFKTLAHPARIRILELLVERDRSVGELLSSDVGLESSNLSQQLGVLRRAGVVAARRDGNAMIYSIAAPDIAELLAVARKVLARVLSDRVAVLEDLRAGGSAT.

Residues 2 to 97 (ESEPLYKLKA…VARKVLARVL (96 aa)) form the HTH arsR-type domain. The H-T-H motif DNA-binding region spans 37–60 (GELLSSDVGLESSNLSQQLGVLRR).

This is an uncharacterized protein from Mycobacterium tuberculosis (strain CDC 1551 / Oshkosh).